The sequence spans 384 residues: Involucrin (384 aa).

The segment at 1 to 384 is disordered; the sequence is MSQQHTLPVT…LPEQPQEPEV (384 aa). 2 stretches are compositionally biased toward basic and acidic residues: residues 56-65 and 80-134; these read PSKHEEKGTD and PELH…ELHL. Over residues 137–146 the composition is skewed to low complexity; sequence QQQQESQEQE. Residues 179-208 show a composition bias toward basic and acidic residues; the sequence is KQREPQESQEQRLHLGKEQESQEQRLHLGE. Positions 239-267 are enriched in low complexity; it reads PEQRLQLLPQGPQEQELHLGKQQQQQESQ. Basic and acidic residues-rich tracts occupy residues 268 to 308 and 315 to 336; these read QHQE…KKLL and EAVKRHEQLQRDEQFGMKKEQL.

The protein belongs to the involucrin family. Directly or indirectly cross-linked to cornifelin (CNFN). In terms of processing, substrate of transglutaminase. Specific glutamines or lysines are cross-linked to keratins, desmoplakin and to inter involucrin molecules. As to expression, keratinocytes of epidermis and other stratified squamous epithelia.

The protein localises to the cytoplasm. Functionally, part of the insoluble cornified cell envelope (CE) of stratified squamous epithelia. The sequence is that of Involucrin (IVL) from Otolemur crassicaudatus (Brown greater galago).